Reading from the N-terminus, the 559-residue chain is Protein GRAVITROPIC IN THE LIGHT 1 (559 aa).

Residues 107–127 are disordered; sequence AVNRREEYDTEEEENEEEGEI. Positions 114 to 127 are enriched in acidic residues; it reads YDTEEEENEEEGEI.

Required for red (R) and far red (FR) light-induced and phytochrome-mediated deregulation of negative gravitropism leading to randomization of hypocotyl growth orientation. The sequence is that of Protein GRAVITROPIC IN THE LIGHT 1 from Arabidopsis thaliana (Mouse-ear cress).